Reading from the N-terminus, the 198-residue chain is MFDKLVVIDAKGHLLGRLASYVAKELLSGQRIVVVRTEAINISGSLFRNRVKFSEFLNKWMNHNPRRGVQHFRAPSRIFWRAVRGMLPHKTPKGAAALERLKIFEGIPTPYDRVKKQVVVDALKVQRLRNSRPVCKLGDLSASVGWGKQTLIEKLEEKRRARAKTYHDKKVKQADARKKELAAPALKAIKDKLAQFGY.

This sequence belongs to the universal ribosomal protein uL13 family.

The polypeptide is Large ribosomal subunit protein uL13 (RPL13A) (Tetrahymena thermophila (strain SB210)).